The sequence spans 143 residues: Large ribosomal subunit protein uL11 (143 aa).

This sequence belongs to the universal ribosomal protein uL11 family. In terms of assembly, part of the ribosomal stalk of the 50S ribosomal subunit. Interacts with L10 and the large rRNA to form the base of the stalk. L10 forms an elongated spine to which L12 dimers bind in a sequential fashion forming a multimeric L10(L12)X complex. In terms of processing, one or more lysine residues are methylated.

Functionally, forms part of the ribosomal stalk which helps the ribosome interact with GTP-bound translation factors. The chain is Large ribosomal subunit protein uL11 from Thiobacillus denitrificans (strain ATCC 25259 / T1).